The chain runs to 545 residues: Phenylalanine--tRNA ligase beta subunit (545 aa).

In terms of domain architecture, B5 spans 268 to 343 (FLHKIQNVRE…MSIGYNNLEP (76 aa)). The Mg(2+) site is built by Asp321, Asp327, Glu330, and Asp331.

It belongs to the phenylalanyl-tRNA synthetase beta subunit family. Type 2 subfamily. As to quaternary structure, tetramer of two alpha and two beta subunits. Mg(2+) is required as a cofactor.

The protein localises to the cytoplasm. It carries out the reaction tRNA(Phe) + L-phenylalanine + ATP = L-phenylalanyl-tRNA(Phe) + AMP + diphosphate + H(+). The sequence is that of Phenylalanine--tRNA ligase beta subunit from Saccharolobus islandicus (strain L.S.2.15 / Lassen #1) (Sulfolobus islandicus).